We begin with the raw amino-acid sequence, 376 residues long: Glutamate 5-kinase (376 aa).

Lys-15 provides a ligand contact to ATP. Substrate is bound by residues Ser-56, Asp-143, and Asn-155. Residue 175–176 (SD) participates in ATP binding. Residues 281–358 (KGTLTIDAGA…PDVMSILGVS (78 aa)) form the PUA domain.

It belongs to the glutamate 5-kinase family.

It localises to the cytoplasm. It catalyses the reaction L-glutamate + ATP = L-glutamyl 5-phosphate + ADP. The protein operates within amino-acid biosynthesis; L-proline biosynthesis; L-glutamate 5-semialdehyde from L-glutamate: step 1/2. In terms of biological role, catalyzes the transfer of a phosphate group to glutamate to form L-glutamate 5-phosphate. In Rhodopseudomonas palustris (strain HaA2), this protein is Glutamate 5-kinase.